Here is a 1019-residue protein sequence, read N- to C-terminus: Katanin p80 WD40 repeat-containing subunit B1 homolog KTN80.1 (1019 aa).

WD repeat units lie at residues 13–53 (AHSG…SPMS), 56–95 (GHTS…MVRA), 98–137 (GHRS…CIQT), 140–181 (GHTR…HEFK), 183–221 (HEGP…LIGT), 224–264 (PEAT…DGVD), and 266–303 (GWST…LEPY). The DWD box signature appears at 114 to 130 (FLASGSSDTNLRVWDTR). Disordered regions lie at residues 388 to 424 (FGPA…TKSG), 455 to 474 (KSGL…LSEQ), 517 to 581 (IHRS…GSRE), and 607 to 652 (RGEK…RARS). Polar residues predominate over residues 465-474 (QTQNAFLSEQ). The span at 553–572 (IPSKTERVLSREKPGDEQKN) shows a compositional bias: basic and acidic residues. Over residues 614 to 628 (TEGASTTIEQNNNAV) the composition is skewed to polar residues.

It belongs to the WD repeat KATNB1 family. As to quaternary structure, component of KTN80-KTN1 complexes composed of a hexamer of KTN1-KTN80 heterodimers that sense microtubule (MT) geometry to confer precise MT severing. Interacts directly with AAA1/KTN1 and KTN80.3, and weakly with KTN80.4. In terms of tissue distribution, expressed at low levels in siliques, flowers, leaves, stems and roots.

It localises to the cytoplasm. The protein localises to the cytoskeleton. Its function is as follows. May participate in a complex which severs microtubules in an ATP-dependent manner. Microtubule severing may promote rapid reorganization of cellular microtubule arrays. Confers precision to microtubule (MT) severing by specific targeting of KTN1 to MT cleavage sites such as crossover or branching nucleation sites. Together with other KTN80s, regulates cell elongation by modulating MT organization. In Arabidopsis thaliana (Mouse-ear cress), this protein is Katanin p80 WD40 repeat-containing subunit B1 homolog KTN80.1.